A 400-amino-acid polypeptide reads, in one-letter code: Lysophospholipid transporter LplT (400 aa).

Transmembrane regions (helical) follow at residues Val-19–Ala-39, Val-53–Ala-73, Ala-91–Ile-111, Leu-139–Ala-159, Ile-164–Ile-184, Leu-227–Leu-247, Tyr-257–Val-277, Thr-281–Leu-301, Ala-304–Val-324, Asn-352–Ala-372, and Val-373–Trp-393.

Belongs to the major facilitator superfamily. LplT (TC 2.A.1.42) family.

It is found in the cell inner membrane. Catalyzes the facilitated diffusion of 2-acyl-glycero-3-phosphoethanolamine (2-acyl-GPE) into the cell. This is Lysophospholipid transporter LplT from Salmonella gallinarum (strain 287/91 / NCTC 13346).